The following is a 741-amino-acid chain: uncharacterized protein (741 aa).

The first 22 residues, Met1–Ala22, serve as a signal peptide directing secretion.

This is an uncharacterized protein from Archaeoglobus fulgidus (strain ATCC 49558 / DSM 4304 / JCM 9628 / NBRC 100126 / VC-16).